The chain runs to 865 residues: Alanine--tRNA ligase (865 aa).

Zn(2+) is bound by residues His-554, His-558, Cys-656, and His-660.

Belongs to the class-II aminoacyl-tRNA synthetase family. Zn(2+) serves as cofactor.

The protein localises to the cytoplasm. It carries out the reaction tRNA(Ala) + L-alanine + ATP = L-alanyl-tRNA(Ala) + AMP + diphosphate. Its function is as follows. Catalyzes the attachment of alanine to tRNA(Ala) in a two-step reaction: alanine is first activated by ATP to form Ala-AMP and then transferred to the acceptor end of tRNA(Ala). Also edits incorrectly charged Ser-tRNA(Ala) and Gly-tRNA(Ala) via its editing domain. This is Alanine--tRNA ligase from Francisella tularensis subsp. holarctica (strain LVS).